Here is a 405-residue protein sequence, read N- to C-terminus: Prostaglandin E2 receptor EP1 subtype (405 aa).

Topologically, residues 1-39 (MSPCGLNLSLADEAATCATPRLPNTSVVLPTGDNGTSPA) are extracellular. Residues Asn-7, Asn-24, and Asn-34 are each glycosylated (N-linked (GlcNAc...) asparagine). The chain crosses the membrane as a helical span at residues 40 to 62 (LPIFSMTLGAVSNVLALALLAQV). The Cytoplasmic segment spans residues 63 to 80 (AGRMRRRRSAATFLLFVA). A helical transmembrane segment spans residues 81 to 99 (SLLAIDLAGHVIPGALVLR). Residues 100-113 (LYTAGRAPAGGACH) lie on the Extracellular side of the membrane. Cysteines 112 and 190 form a disulfide. A helical membrane pass occupies residues 114-135 (FLGGCMVFFGLCPLLLGCGMAV). Topologically, residues 136–157 (ERCVGVTQPLIHAARVSVARAR) are cytoplasmic. The chain crosses the membrane as a helical span at residues 158–179 (LALAVLAAMALAVALLPLVHVG). Residues 180-202 (RYELQYPGTWCFISLGPRGGWRQ) are Extracellular-facing. Residues 203 to 228 (ALLAGLFAGLGLAALLAALVCNTLSG) form a helical membrane-spanning segment. The Cytoplasmic segment spans residues 229–301 (LALLRARWRR…HAHDVEMVGQ (73 aa)). Positions 243 to 287 (RFRKTAGPDDRRRWGSRGPRLASASSASSITSATATLRSSRGGGS) are disordered. Low complexity predominate over residues 262–282 (RLASASSASSITSATATLRSS). A helical membrane pass occupies residues 302–323 (LVGIMVVSCICWSPLLVLVVLA). The Extracellular segment spans residues 324–337 (IGGWNSNSLQRPLF). Residues 338 to 357 (LAVRLASWNQILDPWVYILL) form a helical membrane-spanning segment. The Cytoplasmic segment spans residues 358–405 (RQAMLRQLLRLLPLRVSAKGGPTELGLTKSAWEASSLRSSRHSGFSHL).

It belongs to the G-protein coupled receptor 1 family. Phosphorylated. In terms of tissue distribution, abundant in kidney and in a lesser amount in lung.

The protein localises to the cell membrane. Its function is as follows. Receptor for prostaglandin E2 (PGE2). The activity of this receptor is mediated by G(q) proteins which activate a phosphatidylinositol-calcium second messenger system. May play a role as an important modulator of renal function. Implicated the smooth muscle contractile response to PGE2 in various tissues. The polypeptide is Prostaglandin E2 receptor EP1 subtype (Ptger1) (Mus musculus (Mouse)).